The chain runs to 92 residues: Small ribosomal subunit protein uS19c (92 aa).

This sequence belongs to the universal ribosomal protein uS19 family.

The protein localises to the plastid. The protein resides in the chloroplast. In terms of biological role, protein S19 forms a complex with S13 that binds strongly to the 16S ribosomal RNA. This is Small ribosomal subunit protein uS19c from Oltmannsiellopsis viridis (Marine flagellate).